A 279-amino-acid polypeptide reads, in one-letter code: MMTQMNYTGKVKRVAIIANGKYQSKRVASKLFSVFKDDPDFYLSKKNPDIVISIGGDGMLLSAFHMYEKELDKVRFVGIHTGHLGFYTDYRDFEVDKLIDNLRKDKGEQISYPILKVAITLDDGRVVKARALNEATVKRIEKTMVADVIINHVKFESFRGDGISVSTPTGSTAYNKSLGGAVLHPTIEALQLTEISSLNNRVFRTLGSSIIIPKKDKIELVPKRLGIYTISIDNKTYQLKNVTKVEYFIDDEKIHFVSSPSHTSFWKRVKDAFIGEIDS.

D57 acts as the Proton acceptor in catalysis. Residues 57-58 (DG), 133-134 (NE), R159, D161, and 172-177 (TAYNKS) contribute to the NAD(+) site.

The protein belongs to the NAD kinase family. A divalent metal cation serves as cofactor.

The protein resides in the cytoplasm. The catalysed reaction is NAD(+) + ATP = ADP + NADP(+) + H(+). Involved in the regulation of the intracellular balance of NAD and NADP, and is a key enzyme in the biosynthesis of NADP. Catalyzes specifically the phosphorylation on 2'-hydroxyl of the adenosine moiety of NAD to yield NADP. This is NAD kinase from Streptococcus pyogenes serotype M28 (strain MGAS6180).